Reading from the N-terminus, the 158-residue chain is Auxin-responsive protein IAA31 (158 aa).

Residues 1–40 (MEVSNSCSSFSSSSVDSTKPSPSESSVNLSLSLTFPSTSP) are compositionally biased toward low complexity. Residues 1–49 (MEVSNSCSSFSSSSVDSTKPSPSESSVNLSLSLTFPSTSPQREARQDWP) form a disordered region. The EAR-like (transcriptional repression) motif lies at 29–33 (LSLSL). The region spanning 72 to 157 (SLFVKVYMEG…RRLKITRPER (86 aa)) is the PB1 domain.

It belongs to the Aux/IAA family. Homodimers and heterodimers.

Its subcellular location is the nucleus. Functionally, aux/IAA proteins are short-lived transcriptional factors that function as repressors of early auxin response genes at low auxin concentrations. Repression is thought to result from the interaction with auxin response factors (ARFs), proteins that bind to the auxin-responsive promoter element (AuxRE). Formation of heterodimers with ARF proteins may alter their ability to modulate early auxin response genes expression. The chain is Auxin-responsive protein IAA31 (IAA31) from Arabidopsis thaliana (Mouse-ear cress).